Consider the following 178-residue polypeptide: MAELTTIARPYAKAAFVFAKEHDALEQWEKMLGLAAAVAGDASMRAYLDQPELDDATKVSAFAEVCGDELDESGRNFVAQLTQNKRLPLLPIILQLFHELLAEQQQFTDVEMISAFELDDAATDKLVAALKKRLGTEVNVTTSVDQSLIGGVLVRAGDTVIDGSVRGRLNRLAEQLNS.

This sequence belongs to the ATPase delta chain family. F-type ATPases have 2 components, F(1) - the catalytic core - and F(0) - the membrane proton channel. F(1) has five subunits: alpha(3), beta(3), gamma(1), delta(1), epsilon(1). F(0) has three main subunits: a(1), b(2) and c(10-14). The alpha and beta chains form an alternating ring which encloses part of the gamma chain. F(1) is attached to F(0) by a central stalk formed by the gamma and epsilon chains, while a peripheral stalk is formed by the delta and b chains.

The protein resides in the cell inner membrane. F(1)F(0) ATP synthase produces ATP from ADP in the presence of a proton or sodium gradient. F-type ATPases consist of two structural domains, F(1) containing the extramembraneous catalytic core and F(0) containing the membrane proton channel, linked together by a central stalk and a peripheral stalk. During catalysis, ATP synthesis in the catalytic domain of F(1) is coupled via a rotary mechanism of the central stalk subunits to proton translocation. In terms of biological role, this protein is part of the stalk that links CF(0) to CF(1). It either transmits conformational changes from CF(0) to CF(1) or is implicated in proton conduction. The sequence is that of ATP synthase subunit delta from Alcanivorax borkumensis (strain ATCC 700651 / DSM 11573 / NCIMB 13689 / SK2).